A 261-amino-acid polypeptide reads, in one-letter code: Thiazole synthase (261 aa).

K102 serves as the catalytic Schiff-base intermediate with DXP. 1-deoxy-D-xylulose 5-phosphate contacts are provided by residues G163, 189–190, and 211–212; these read AG and NT.

It belongs to the ThiG family. In terms of assembly, homotetramer. Forms heterodimers with either ThiH or ThiS.

It is found in the cytoplasm. The enzyme catalyses [ThiS sulfur-carrier protein]-C-terminal-Gly-aminoethanethioate + 2-iminoacetate + 1-deoxy-D-xylulose 5-phosphate = [ThiS sulfur-carrier protein]-C-terminal Gly-Gly + 2-[(2R,5Z)-2-carboxy-4-methylthiazol-5(2H)-ylidene]ethyl phosphate + 2 H2O + H(+). It functions in the pathway cofactor biosynthesis; thiamine diphosphate biosynthesis. Catalyzes the rearrangement of 1-deoxy-D-xylulose 5-phosphate (DXP) to produce the thiazole phosphate moiety of thiamine. Sulfur is provided by the thiocarboxylate moiety of the carrier protein ThiS. In vitro, sulfur can be provided by H(2)S. The chain is Thiazole synthase from Acinetobacter baumannii (strain AB307-0294).